The chain runs to 218 residues: Thiopurine S-methyltransferase (218 aa).

Residues Trp-10, Leu-45, Glu-66, and Arg-123 each coordinate S-adenosyl-L-methionine.

Belongs to the class I-like SAM-binding methyltransferase superfamily. TPMT family.

It is found in the cytoplasm. It catalyses the reaction S-adenosyl-L-methionine + a thiopurine = S-adenosyl-L-homocysteine + a thiopurine S-methylether.. This chain is Thiopurine S-methyltransferase, found in Pseudomonas aeruginosa (strain UCBPP-PA14).